The primary structure comprises 661 residues: Transketolase (661 aa).

His28 contributes to the substrate binding site. Thiamine diphosphate contacts are provided by residues His68 and 116–118 (GPL). Glu157 contacts Mg(2+). Positions 158 and 187 each coordinate thiamine diphosphate. Residues Asn187 and Ile189 each coordinate Mg(2+). Substrate-binding residues include His261 and Arg358. His261 is a thiamine diphosphate binding site. The active-site Proton donor is Glu412. Phe438 is a thiamine diphosphate binding site. Substrate is bound by residues His462, Asp470, and Arg521.

The protein belongs to the transketolase family. In terms of assembly, homodimer. The cofactor is Mg(2+). Requires Ca(2+) as cofactor. Mn(2+) serves as cofactor. It depends on Co(2+) as a cofactor. Thiamine diphosphate is required as a cofactor.

It carries out the reaction D-sedoheptulose 7-phosphate + D-glyceraldehyde 3-phosphate = aldehydo-D-ribose 5-phosphate + D-xylulose 5-phosphate. In terms of biological role, catalyzes the transfer of a two-carbon ketol group from a ketose donor to an aldose acceptor, via a covalent intermediate with the cofactor thiamine pyrophosphate. The polypeptide is Transketolase (tkt) (Treponema pallidum (strain Nichols)).